A 539-amino-acid polypeptide reads, in one-letter code: Eukaryotic translation initiation factor 3 subunit L (539 aa).

The PCI domain occupies 306 to 514 (TFSDILLYIQ…IHIADTKVSH (209 aa)).

The protein belongs to the eIF-3 subunit L family. In terms of assembly, component of the eukaryotic translation initiation factor 3 (eIF-3) complex. The eIF-3 complex interacts with pix.

The protein resides in the cytoplasm. Component of the eukaryotic translation initiation factor 3 (eIF-3) complex, which is involved in protein synthesis of a specialized repertoire of mRNAs and, together with other initiation factors, stimulates binding of mRNA and methionyl-tRNAi to the 40S ribosome. The eIF-3 complex specifically targets and initiates translation of a subset of mRNAs involved in cell proliferation. In Drosophila melanogaster (Fruit fly), this protein is Eukaryotic translation initiation factor 3 subunit L.